Consider the following 767-residue polypeptide: uncharacterized protein (767 aa).

Disordered stretches follow at residues 171 to 209, 314 to 340, and 533 to 566; these read LPVW…LRTP, ETEA…CQEE, and RDHG…PRGF. Basic and acidic residues-rich tracts occupy residues 322 to 331 and 552 to 564; these read PDPRPEKDAK and ETKD…RDPR.

This is an uncharacterized protein from Homo sapiens (Human).